Here is a 610-residue protein sequence, read N- to C-terminus: Replication protein E1 (610 aa).

The Nuclear localization signal motif lies at 83 to 85 (KRK). Phosphoserine; by host is present on residues Ser-93 and Ser-102. The Nuclear export signal motif lies at 101 to 110 (LSPRLEAVTI). The segment at 148–312 (ESGTLVVETD…MLDHESAASS (165 aa)) is DNA-binding region. Residues 411–561 (VNFISFLCAL…LPLKENDEVL (151 aa)) enclose the SF3 helicase domain. 437-444 (GPPDTGKS) is a binding site for ATP. Lys-518 is covalently cross-linked (Glycyl lysine isopeptide (Lys-Gly) (interchain with G-Cter in SUMO)). The segment at 591–610 (ESGRSDRAFRCTAGTNTESI) is disordered.

Belongs to the papillomaviridae E1 protein family. Can form hexamers. Interacts with E2 protein; this interaction increases E1 DNA binding specificity. Interacts with host DNA polymerase subunit POLA2. Interacts with host single stranded DNA-binding protein RPA1. Interacts with host TOP1; this interaction stimulates the enzymatic activity of TOP1. In terms of processing, phosphorylated. Sumoylated.

The protein resides in the host nucleus. The catalysed reaction is Couples ATP hydrolysis with the unwinding of duplex DNA by translocating in the 3'-5' direction.. It carries out the reaction ATP + H2O = ADP + phosphate + H(+). Its function is as follows. ATP-dependent DNA 3'-5' helicase required for initiation of viral DNA replication. It forms a complex with the viral E2 protein. The E1-E2 complex binds to the replication origin which contains binding sites for both proteins. During the initial step, a dimer of E1 interacts with a dimer of protein E2 leading to a complex that binds the viral origin of replication with high specificity. Then, a second dimer of E1 displaces the E2 dimer in an ATP-dependent manner to form the E1 tetramer. Following this, two E1 monomers are added to each half of the site, which results in the formation of two E1 trimers on the viral ori. Subsequently, two hexamers will be created. The double hexamer acts as a bi-directional helicase machinery and unwinds the viral DNA and then recruits the host DNA polymerase to start replication. The protein is Replication protein E1 of Human papillomavirus type 60.